The chain runs to 323 residues: CD-NTase-associated protein 12 (323 aa).

A TIR domain is found at Arg4–Thr120. The active site involves Glu84. Residues Ser154–Leu323 are STING domain. Residues Ser164, Phe165, Arg234, Pro237, Asp259, Ser262, and Thr263 each contribute to the 3',3'-c-di-GMP site.

It in the C-terminal section; belongs to the bacterial STING family. In terms of assembly, forms homodimers which subsequently form filaments. In vitro in the presence of c-di-GMP forms filaments up to 300 nm in length with an ordered array of parallel-stacked subunits, where the TIR domains form one face of the filament and the STING domains form the other face. Antiparallel double-filament structures are also seen. 3'3'-cGAMP weakly induces filament formation, while 2'3'-cGAMP does not.

The enzyme catalyses NAD(+) + H2O = ADP-D-ribose + nicotinamide + H(+). NAD(+) hydrolase activity is strongly stimulated by c-di-GMP, weakly by 3'3'-cGAMP, very weakly by c-di-AMP and not at all by 2'3'-cGAMP. Self-association of TIR domains is required for NADase activity. Functionally, effector protein of a CBASS antiviral system with NAD(+) hydrolase activity. CBASS (cyclic oligonucleotide-based antiphage signaling system) provides immunity against bacteriophage. The CD-NTase protein synthesizes cyclic nucleotides in response to infection; these serve as specific second messenger signals. The signals activate a diverse range of effectors, leading to bacterial cell death and thus abortive phage infection. A type I-D(GG) CBASS system. In terms of biological role, upon activation by 3'3'-c-di-GMP forms filaments which hydrolyze NAD(+); filament formation is required for enzyme activation. Induction in an E.coli strain that synthesizes c-di-GMP leads to significant growth inhibition. Binds c-di-GMP and 3'3'-cGAMP (3'3'-cyclic GMP-AMP), but not c-di-AMP, 2'3'-cGAMP or cUMP-AMP. This is CD-NTase-associated protein 12 from Sphingobacterium faecium (strain DSM 11690 / JCM 21820 / NBRC 15299 / NCIMB 13408 / KS 0470).